The chain runs to 375 residues: 23S rRNA (uracil(747)-C(5))-methyltransferase RlmC (375 aa).

Residues cysteine 3, cysteine 11, cysteine 14, and cysteine 87 each coordinate [4Fe-4S] cluster. S-adenosyl-L-methionine-binding residues include glutamine 212, phenylalanine 241, glutamate 262, and asparagine 307. The active-site Nucleophile is the cysteine 334.

Belongs to the class I-like SAM-binding methyltransferase superfamily. RNA M5U methyltransferase family. RlmC subfamily.

The catalysed reaction is uridine(747) in 23S rRNA + S-adenosyl-L-methionine = 5-methyluridine(747) in 23S rRNA + S-adenosyl-L-homocysteine + H(+). Catalyzes the formation of 5-methyl-uridine at position 747 (m5U747) in 23S rRNA. This chain is 23S rRNA (uracil(747)-C(5))-methyltransferase RlmC, found in Shigella flexneri serotype 5b (strain 8401).